The sequence spans 476 residues: Stromelysin-2 (476 aa).

An N-terminal signal peptide occupies residues 1–17 (MEPLAILVLLCFPICSA). Residues 18-99 (YPLHGAVRQD…PRCGVPDVGG (82 aa)) constitute a propeptide, activation peptide. The Cysteine switch signature appears at 90–97 (PRCGVPDV). C92, H168, D170, H183, H196, and H218 together coordinate Zn(2+). The active site involves E219. Positions 222 and 228 each coordinate Zn(2+). Hemopexin repeat units lie at residues 286 to 335 (PVKC…WPSL), 336 to 382 (PSGL…GFPP), 384 to 432 (VKKI…FPGI), and 433 to 476 (EPQV…WLLC). The cysteines at positions 289 and 476 are disulfide-linked.

It belongs to the peptidase M10A family. The cofactor is Zn(2+). Ca(2+) is required as a cofactor.

The protein localises to the secreted. Its subcellular location is the extracellular space. The protein resides in the extracellular matrix. The enzyme catalyses Similar to stromelysin 1, but action on collagen types III, IV and V is weak.. Can degrade fibronectin, gelatins of type I, III, IV, and V; weakly collagens III, IV, and V. Activates procollagenase. The protein is Stromelysin-2 (Mmp10) of Rattus norvegicus (Rat).